We begin with the raw amino-acid sequence, 152 residues long: Ribonuclease H (152 aa).

An RNase H type-1 domain is found at 1-142; the sequence is MKEVTIYTDG…CDELARAAIA (142 aa). Residues Asp9, Glu47, Asp69, and Asp134 each contribute to the Mg(2+) site.

This sequence belongs to the RNase H family. In terms of assembly, monomer. The cofactor is Mg(2+).

The protein localises to the cytoplasm. The enzyme catalyses Endonucleolytic cleavage to 5'-phosphomonoester.. In terms of biological role, endonuclease that specifically degrades the RNA of RNA-DNA hybrids. This chain is Ribonuclease H, found in Moorella thermoacetica (strain ATCC 39073 / JCM 9320).